The primary structure comprises 257 residues: Trans-aconitate 2-methyltransferase (257 aa).

It belongs to the methyltransferase superfamily. Tam family.

Its subcellular location is the cytoplasm. The catalysed reaction is trans-aconitate + S-adenosyl-L-methionine = (E)-3-(methoxycarbonyl)pent-2-enedioate + S-adenosyl-L-homocysteine. Catalyzes the S-adenosylmethionine monomethyl esterification of trans-aconitate. This is Trans-aconitate 2-methyltransferase from Rhizobium meliloti (strain 1021) (Ensifer meliloti).